Consider the following 313-residue polypeptide: Ribosomal RNA small subunit methyltransferase I (313 aa).

The segment at methionine 1–arginine 23 is disordered.

This sequence belongs to the methyltransferase superfamily. RsmI family.

It localises to the cytoplasm. It catalyses the reaction cytidine(1402) in 16S rRNA + S-adenosyl-L-methionine = 2'-O-methylcytidine(1402) in 16S rRNA + S-adenosyl-L-homocysteine + H(+). Catalyzes the 2'-O-methylation of the ribose of cytidine 1402 (C1402) in 16S rRNA. This is Ribosomal RNA small subunit methyltransferase I from Micromonospora olivasterospora.